A 256-amino-acid polypeptide reads, in one-letter code: Ribonuclease 3 (256 aa).

Residues 3–125 (LDALQQRLGY…IVGAVFLDAG (123 aa)) form the RNase III domain. Glu-38 lines the Mg(2+) pocket. Asp-42 is an active-site residue. 2 residues coordinate Mg(2+): Asp-111 and Glu-114. Glu-114 is a catalytic residue. Positions 152–222 (DAKTLLQEYL…AKLALDEVQK (71 aa)) constitute a DRBM domain. The tract at residues 230 to 256 (RSRAERTGKTRKQPVPQDPQLSLRLKE) is disordered.

It belongs to the ribonuclease III family. Homodimer. Mg(2+) serves as cofactor.

Its subcellular location is the cytoplasm. The catalysed reaction is Endonucleolytic cleavage to 5'-phosphomonoester.. Its function is as follows. Digests double-stranded RNA. Involved in the processing of primary rRNA transcript to yield the immediate precursors to the large and small rRNAs (23S and 16S). Processes some mRNAs, and tRNAs when they are encoded in the rRNA operon. Processes pre-crRNA and tracrRNA of type II CRISPR loci if present in the organism. The chain is Ribonuclease 3 from Cupriavidus necator (strain ATCC 17699 / DSM 428 / KCTC 22496 / NCIMB 10442 / H16 / Stanier 337) (Ralstonia eutropha).